The chain runs to 457 residues: Bifunctional protein GlmU (457 aa).

The pyrophosphorylase stretch occupies residues 1–230; the sequence is MPLSLPLHIV…PREVEGVNDL (230 aa). Residues 12–15, Lys26, Gln78, 83–84, 105–107, Gly140, Glu155, Asn170, and Asn228 contribute to the UDP-N-acetyl-alpha-D-glucosamine site; these read LAAG, GT, and YGD. Asp107 contacts Mg(2+). Asn228 provides a ligand contact to Mg(2+). The interval 231 to 251 is linker; sequence WQLTQLERTWQIRAARALCLQ. The tract at residues 252 to 457 is N-acetyltransferase; it reads GARVADPARL…DGWQRPKKKT (206 aa). UDP-N-acetyl-alpha-D-glucosamine-binding residues include Arg334 and Lys352. His364 functions as the Proton acceptor in the catalytic mechanism. Residues Tyr367 and Asn378 each contribute to the UDP-N-acetyl-alpha-D-glucosamine site. Acetyl-CoA-binding positions include Ala381, 387–388, Ser406, Ala424, and Arg441; that span reads NY.

The protein in the N-terminal section; belongs to the N-acetylglucosamine-1-phosphate uridyltransferase family. This sequence in the C-terminal section; belongs to the transferase hexapeptide repeat family. Homotrimer. Mg(2+) is required as a cofactor.

The protein localises to the cytoplasm. It carries out the reaction alpha-D-glucosamine 1-phosphate + acetyl-CoA = N-acetyl-alpha-D-glucosamine 1-phosphate + CoA + H(+). It catalyses the reaction N-acetyl-alpha-D-glucosamine 1-phosphate + UTP + H(+) = UDP-N-acetyl-alpha-D-glucosamine + diphosphate. It participates in nucleotide-sugar biosynthesis; UDP-N-acetyl-alpha-D-glucosamine biosynthesis; N-acetyl-alpha-D-glucosamine 1-phosphate from alpha-D-glucosamine 6-phosphate (route II): step 2/2. The protein operates within nucleotide-sugar biosynthesis; UDP-N-acetyl-alpha-D-glucosamine biosynthesis; UDP-N-acetyl-alpha-D-glucosamine from N-acetyl-alpha-D-glucosamine 1-phosphate: step 1/1. Its pathway is bacterial outer membrane biogenesis; LPS lipid A biosynthesis. Catalyzes the last two sequential reactions in the de novo biosynthetic pathway for UDP-N-acetylglucosamine (UDP-GlcNAc). The C-terminal domain catalyzes the transfer of acetyl group from acetyl coenzyme A to glucosamine-1-phosphate (GlcN-1-P) to produce N-acetylglucosamine-1-phosphate (GlcNAc-1-P), which is converted into UDP-GlcNAc by the transfer of uridine 5-monophosphate (from uridine 5-triphosphate), a reaction catalyzed by the N-terminal domain. This is Bifunctional protein GlmU from Xylella fastidiosa (strain M12).